The primary structure comprises 136 residues: FK506-binding protein 2 (136 aa).

The N-terminal stretch at 1 to 17 is a signal peptide; sequence MLSQIWILFTFMVCVIA. The PPIase FKBP-type domain maps to 45 to 134; the sequence is GDMVSVHYTG…DFDVELVDIA (90 aa).

The protein belongs to the FKBP-type PPIase family. FKBP2 subfamily.

The protein localises to the endoplasmic reticulum. The enzyme catalyses [protein]-peptidylproline (omega=180) = [protein]-peptidylproline (omega=0). Its activity is regulated as follows. Inhibited by both FK506 and rapamycin. In terms of biological role, PPIases accelerate the folding of proteins. It catalyzes the cis-trans isomerization of proline imidic peptide bonds in oligopeptides. This chain is FK506-binding protein 2 (FPR2), found in Candida glabrata (strain ATCC 2001 / BCRC 20586 / JCM 3761 / NBRC 0622 / NRRL Y-65 / CBS 138) (Yeast).